A 122-amino-acid polypeptide reads, in one-letter code: uncharacterized protein (122 aa).

It belongs to the IIV-6 115R family.

This is an uncharacterized protein from Acheta domesticus (House cricket).